We begin with the raw amino-acid sequence, 159 residues long: Ribosomal RNA large subunit methyltransferase H (159 aa).

Residues leucine 76, glycine 108, and 127-132 (FSRMTF) each bind S-adenosyl-L-methionine.

This sequence belongs to the RNA methyltransferase RlmH family. Homodimer.

The protein resides in the cytoplasm. The enzyme catalyses pseudouridine(1915) in 23S rRNA + S-adenosyl-L-methionine = N(3)-methylpseudouridine(1915) in 23S rRNA + S-adenosyl-L-homocysteine + H(+). Functionally, specifically methylates the pseudouridine at position 1915 (m3Psi1915) in 23S rRNA. In Bacillus pumilus (strain SAFR-032), this protein is Ribosomal RNA large subunit methyltransferase H.